A 156-amino-acid polypeptide reads, in one-letter code: Arginine repressor (156 aa).

The protein belongs to the ArgR family.

The protein resides in the cytoplasm. It participates in amino-acid biosynthesis; L-arginine biosynthesis [regulation]. In terms of biological role, regulates arginine biosynthesis genes. The sequence is that of Arginine repressor from Shewanella sediminis (strain HAW-EB3).